Consider the following 705-residue polypeptide: uncharacterized protein (705 aa).

This is an uncharacterized protein from Acanthamoeba polyphaga (Amoeba).